A 182-amino-acid chain; its full sequence is Gamma-crystallin N (182 aa).

Beta/gamma crystallin 'Greek key' domains follow at residues 6-46, 47-89, and 95-136; these read GKIT…HVES, GAWV…RPVG, and FRLE…KVYG. The tract at residues 153–182 is disordered; the sequence is LSSSLQSDQGPEEATTKPATTQPPFLTANL. Positions 169–182 are enriched in polar residues; the sequence is KPATTQPPFLTANL.

The protein belongs to the beta/gamma-crystallin family. As to quaternary structure, monomer. Not specifically expressed in eye.

This chain is Gamma-crystallin N, found in Homo sapiens (Human).